The following is a 196-amino-acid chain: Probable nicotinate-nucleotide adenylyltransferase (196 aa).

It belongs to the NadD family.

The enzyme catalyses nicotinate beta-D-ribonucleotide + ATP + H(+) = deamido-NAD(+) + diphosphate. It participates in cofactor biosynthesis; NAD(+) biosynthesis; deamido-NAD(+) from nicotinate D-ribonucleotide: step 1/1. Its function is as follows. Catalyzes the reversible adenylation of nicotinate mononucleotide (NaMN) to nicotinic acid adenine dinucleotide (NaAD). In Caldicellulosiruptor saccharolyticus (strain ATCC 43494 / DSM 8903 / Tp8T 6331), this protein is Probable nicotinate-nucleotide adenylyltransferase.